The chain runs to 202 residues: uncharacterized protein (202 aa).

Over 1–6 the chain is Cytoplasmic; that stretch reads MITDFL. Residues 7 to 23 traverse the membrane as a helical; Signal-anchor for type II membrane protein segment; sequence LAFSILAVSTTLGVSNL. At 24–202 the chain is on the extracellular side; it reads NKQCRDLLQC…KNGKTRGHSG (179 aa). N-linked (GlcNAc...) asparagine glycosylation occurs at Asn53.

It is found in the membrane. This is an uncharacterized protein from Caenorhabditis elegans.